The chain runs to 145 residues: FAD synthase (145 aa).

Residues 9 to 10 (TF), 14 to 17 (HPGH), aspartate 94, and tyrosine 122 each bind ATP.

The protein belongs to the archaeal FAD synthase family. In terms of assembly, homodimer. The cofactor is a divalent metal cation.

The enzyme catalyses FMN + ATP + H(+) = FAD + diphosphate. Its pathway is cofactor biosynthesis; FAD biosynthesis; FAD from FMN: step 1/1. Catalyzes the transfer of the AMP portion of ATP to flavin mononucleotide (FMN) to produce flavin adenine dinucleotide (FAD) coenzyme. This Methanocaldococcus infernus (strain DSM 11812 / JCM 15783 / ME) protein is FAD synthase.